A 102-amino-acid chain; its full sequence is Aspartyl/glutamyl-tRNA(Asn/Gln) amidotransferase subunit C (102 aa).

It belongs to the GatC family. Heterotrimer of A, B and C subunits.

The enzyme catalyses L-glutamyl-tRNA(Gln) + L-glutamine + ATP + H2O = L-glutaminyl-tRNA(Gln) + L-glutamate + ADP + phosphate + H(+). It carries out the reaction L-aspartyl-tRNA(Asn) + L-glutamine + ATP + H2O = L-asparaginyl-tRNA(Asn) + L-glutamate + ADP + phosphate + 2 H(+). In terms of biological role, allows the formation of correctly charged Asn-tRNA(Asn) or Gln-tRNA(Gln) through the transamidation of misacylated Asp-tRNA(Asn) or Glu-tRNA(Gln) in organisms which lack either or both of asparaginyl-tRNA or glutaminyl-tRNA synthetases. The reaction takes place in the presence of glutamine and ATP through an activated phospho-Asp-tRNA(Asn) or phospho-Glu-tRNA(Gln). The sequence is that of Aspartyl/glutamyl-tRNA(Asn/Gln) amidotransferase subunit C from Bordetella petrii (strain ATCC BAA-461 / DSM 12804 / CCUG 43448).